The sequence spans 266 residues: MVKVTFNSALAQKEAKKDESKSGEEALIIPPDAVAVDCKDPDEVVPVGQRRAWCWCMCFGLAFMLAGVILGGAYLYKYFAFQPDDVYYCGIKYIKDDVILNEPSADAPASRYQTIEENIKIFEEDEVEFISVPVPEFADSDPANIVHDFNKKLTAYLDLNLDKCYVIPLNTSIVMPPKNLLELLINIKAGTYLPQSYLIHEHMVITDRIENIDHLGFYIYRLCHDKETYKLQRRETIKGIQKRSADVCVTIRHFENRFAVETLICP.

The Cytoplasmic segment spans residues methionine 1–cysteine 54. A helical; Signal-anchor for type II membrane protein transmembrane segment spans residues tryptophan 55 to leucine 75. Residues tyrosine 76–proline 266 lie on the Lumenal side of the membrane. The necessary for interaction with APP and inhibitor effects on APP processing stretch occupies residues glutamate 102–valine 134. The region spanning phenylalanine 137–leucine 231 is the BRICHOS domain. Intrachain disulfides connect cysteine 164-cysteine 223 and cysteine 248-cysteine 265. An N-linked (GlcNAc...) asparagine glycan is attached at asparagine 170.

Belongs to the ITM2 family. In terms of assembly, homodimer; disulfide-linked. Interacts with SPPL2A and SPPL2B. Interacts with APP. Mature BRI2 (mBRI2) interacts with the APP amyloid-beta A4 protein; the interaction occurs at the cell surface and in the endocytic compartments and enable alpha- and beta-secretase-induced APP cleavage inhibition. Mature BRI2 (mBRI2) interacts with the APP C99; the interaction occurs in the endocytic compartments and enable gamma-secretase-induced C99 cleavage inhibition. May form heterodimers with Bri23 peptide and APP amyloid-beta protein 40. Interacts with ADAM7 in sperm; the interaction increases following capacitation. Post-translationally, the ectodomain C-terminal part of the imBRI2 is processed by furin producing a secreted Bri23 peptide and a mature BRI2, membrane form (mBRI2). The remaining part of the ectodomain of mBRI2 containing the BRICHOS domain is cleaved by ADAM10 and is secreted (BRI2C, soluble form). The membrane-bound N-terminal fragment (BRI2C, membrane form) is further proteolytically processed by SPPL2A and SPPL2B through regulated intramembrane proteolysis producing a secreted C-peptide and a BRI2 intracellular domain (BRI2 ICD) released in the cytosol. Shedding by ADAM10 facilitates intramembrane cleavage but is not absolutely required for BRI2 ICD generation. In terms of processing, glycosylation at Asn-170 is important for cell surface localization, but doesn't affect furin- and ADAM10-induced proteolytic processing.

Its subcellular location is the golgi apparatus membrane. It localises to the cell membrane. The protein resides in the endosome membrane. It is found in the secreted. Functionally, plays a regulatory role in the processing of the amyloid-beta A4 precursor protein (APP) and acts as an inhibitor of the amyloid-beta peptide aggregation and fibrils deposition. Plays a role in the induction of neurite outgrowth. Functions as a protease inhibitor by blocking access of secretases to APP cleavage sites. Mature BRI2 (mBRI2) functions as a modulator of the amyloid-beta A4 precursor protein (APP) processing leading to a strong reduction in the secretion of secretase-processed amyloid-beta protein 40 and amyloid-beta protein 42. Its function is as follows. Bri23 peptide prevents aggregation of APP amyloid-beta protein 42 into toxic oligomers. The sequence is that of Integral membrane protein 2B (ITM2B) from Bos taurus (Bovine).